A 308-amino-acid polypeptide reads, in one-letter code: Very-long-chain enoyl-CoA reductase (308 aa).

Residues 1-86 (MKHYEVEILD…YFRDLGAQIS (86 aa)) are Cytoplasmic-facing. K22 carries the post-translational modification N6-acetyllysine. Residue S58 is modified to Phosphoserine. At K60 the chain carries N6-acetyllysine. Residues 87 to 106 (WVTVFLTEYAGPLFIYLLFY) form a helical membrane-spanning segment. Topologically, residues 107–124 (FRVPFIYGHKYDFTSSRH) are lumenal. A helical transmembrane segment spans residues 125 to 147 (TVVHLACICHSFHYIKRLLETLF). The Cytoplasmic segment spans residues 148–158 (VHRFSHGTMPL). A helical transmembrane segment spans residues 159 to 180 (RNIFKNCTYYWGFAAWMAYYIN). At 181-189 (HPLYTPPTY) the chain is on the lumenal side. Residues 190–216 (GAQQVKLALAIFVICQLGNFSIHMALR) traverse the membrane as a helical segment. Residues 217-245 (DLRPAGSKTRKIPYPTKNPFTWLFLLVSC) lie on the Cytoplasmic side of the membrane. A helical membrane pass occupies residues 246–262 (PNYTYEVGSWIGFAIMT). Residues 263–264 (QC) lie on the Lumenal side of the membrane. The chain crosses the membrane as a helical span at residues 265 to 292 (LPVALFSLVGFTQMTIWAKGKHRSYLKE). Residues 293 to 308 (FRDYPPLRMPIIPFLL) lie on the Cytoplasmic side of the membrane.

This sequence belongs to the steroid 5-alpha reductase family. Interacts with ELOVL1 and LASS2. Interacts with HACD1 and HACD2 (via the third lumenal loop), but not with HACD3 and HACD4. Interacts with ELOVL1, ELOVL2, ELOVL3, ELOVL5 and ELOVL7 in the presence of acyl-CoA; interaction with HACD1/2 and that with ELOVLs are mutually exclusive. Post-translationally, glycosylated. As to expression, expressed in most tissues tested. Highly expressed in skeletal muscle.

The protein resides in the endoplasmic reticulum membrane. The enzyme catalyses a very-long-chain 2,3-saturated fatty acyl-CoA + NADP(+) = a very-long-chain (2E)-enoyl-CoA + NADPH + H(+). It catalyses the reaction octadecanoyl-CoA + NADP(+) = (2E)-octadecenoyl-CoA + NADPH + H(+). It carries out the reaction (2E,7Z,10Z,13Z,16Z)-docosapentaenoyl-CoA + NADPH + H(+) = (7Z,10Z,13Z,16Z)-docosatetraenoyl-CoA + NADP(+). The catalysed reaction is (2E,7Z,10Z,13Z,16Z,19Z)-docosahexaenoyl-CoA + NADPH + H(+) = (7Z,10Z,13Z,16Z,19Z)-docosapentaenoyl-CoA + NADP(+). The enzyme catalyses (2E,8Z,11Z,14Z)-eicosatetraenoyl-CoA + NADPH + H(+) = (8Z,11Z,14Z)-eicosatrienoyl-CoA + NADP(+). It catalyses the reaction (2E)-hexadecenoyl-CoA + NADPH + H(+) = hexadecanoyl-CoA + NADP(+). It functions in the pathway lipid metabolism; fatty acid biosynthesis. The protein operates within lipid metabolism; sphingolipid metabolism. Its function is as follows. Involved in both the production of very long-chain fatty acids for sphingolipid synthesis and the degradation of the sphingosine moiety in sphingolipids through the sphingosine 1-phosphate metabolic pathway. Catalyzes the last of the four reactions of the long-chain fatty acids elongation cycle. This endoplasmic reticulum-bound enzymatic process, allows the addition of 2 carbons to the chain of long- and very long-chain fatty acids/VLCFAs per cycle. This enzyme reduces the trans-2,3-enoyl-CoA fatty acid intermediate to an acyl-CoA that can be further elongated by entering a new cycle of elongation. Thereby, it participates in the production of VLCFAs of different chain lengths that are involved in multiple biological processes as precursors of membrane lipids and lipid mediators. Catalyzes the saturation step of the sphingosine 1-phosphate metabolic pathway, the conversion of trans-2-hexadecenoyl-CoA to palmitoyl-CoA. The protein is Very-long-chain enoyl-CoA reductase (TECR) of Homo sapiens (Human).